Consider the following 345-residue polypeptide: Methylthioribose-1-phosphate isomerase (345 aa).

Substrate contacts are provided by residues 44-46, R86, and Q194; that span reads RGA. Catalysis depends on D235, which acts as the Proton donor. 245–246 contacts substrate; it reads NK.

This sequence belongs to the eIF-2B alpha/beta/delta subunits family. MtnA subfamily.

It carries out the reaction 5-(methylsulfanyl)-alpha-D-ribose 1-phosphate = 5-(methylsulfanyl)-D-ribulose 1-phosphate. Its pathway is amino-acid biosynthesis; L-methionine biosynthesis via salvage pathway; L-methionine from S-methyl-5-thio-alpha-D-ribose 1-phosphate: step 1/6. Functionally, catalyzes the interconversion of methylthioribose-1-phosphate (MTR-1-P) into methylthioribulose-1-phosphate (MTRu-1-P). The chain is Methylthioribose-1-phosphate isomerase from Desulfitobacterium hafniense (strain DSM 10664 / DCB-2).